The primary structure comprises 424 residues: Serine--tRNA ligase (424 aa).

231-233 (TAE) contributes to the L-serine binding site. Residue 262 to 264 (RSE) coordinates ATP. Glutamate 285 contacts L-serine. Residue 349-352 (EISS) coordinates ATP. Serine 385 lines the L-serine pocket.

The protein belongs to the class-II aminoacyl-tRNA synthetase family. Type-1 seryl-tRNA synthetase subfamily. As to quaternary structure, homodimer. The tRNA molecule binds across the dimer.

Its subcellular location is the cytoplasm. The catalysed reaction is tRNA(Ser) + L-serine + ATP = L-seryl-tRNA(Ser) + AMP + diphosphate + H(+). It catalyses the reaction tRNA(Sec) + L-serine + ATP = L-seryl-tRNA(Sec) + AMP + diphosphate + H(+). Its pathway is aminoacyl-tRNA biosynthesis; selenocysteinyl-tRNA(Sec) biosynthesis; L-seryl-tRNA(Sec) from L-serine and tRNA(Sec): step 1/1. Functionally, catalyzes the attachment of serine to tRNA(Ser). Is also able to aminoacylate tRNA(Sec) with serine, to form the misacylated tRNA L-seryl-tRNA(Sec), which will be further converted into selenocysteinyl-tRNA(Sec). The sequence is that of Serine--tRNA ligase from Bacillus cereus (strain ATCC 10987 / NRS 248).